Consider the following 394-residue polypeptide: Phosphoglycerate kinase (394 aa).

Residues 21 to 23, R37, 60 to 63, R119, and R152 contribute to the substrate site; these read DFN and HLGR. ATP-binding positions include K202, G293, E324, and 350 to 353; that span reads GGDS.

This sequence belongs to the phosphoglycerate kinase family. In terms of assembly, monomer.

It localises to the cytoplasm. The catalysed reaction is (2R)-3-phosphoglycerate + ATP = (2R)-3-phospho-glyceroyl phosphate + ADP. The protein operates within carbohydrate degradation; glycolysis; pyruvate from D-glyceraldehyde 3-phosphate: step 2/5. The protein is Phosphoglycerate kinase of Caldanaerobacter subterraneus subsp. tengcongensis (strain DSM 15242 / JCM 11007 / NBRC 100824 / MB4) (Thermoanaerobacter tengcongensis).